The primary structure comprises 133 residues: Small ribosomal subunit protein uS19 (133 aa).

It belongs to the universal ribosomal protein uS19 family.

In terms of biological role, protein S19 forms a complex with S13 that binds strongly to the 16S ribosomal RNA. The polypeptide is Small ribosomal subunit protein uS19 (Thermococcus gammatolerans (strain DSM 15229 / JCM 11827 / EJ3)).